The primary structure comprises 382 residues: Mannitol-1-phosphate 5-dehydrogenase (382 aa).

3–14 serves as a coordination point for NAD(+); that stretch reads ALHFGAGNIGRG.

Belongs to the mannitol dehydrogenase family.

It catalyses the reaction D-mannitol 1-phosphate + NAD(+) = beta-D-fructose 6-phosphate + NADH + H(+). The chain is Mannitol-1-phosphate 5-dehydrogenase from Salmonella agona (strain SL483).